The primary structure comprises 170 residues: Class I hydrophobin E (170 aa).

An N-terminal signal peptide occupies residues 1–19; it reads MQLTTLLTGLISVLSVTTA. Cystine bridges form between Cys-62-Cys-126, Cys-70-Cys-117, Cys-71-Cys-105, and Cys-127-Cys-139.

The protein belongs to the fungal hydrophobin family.

It localises to the secreted. The protein resides in the cell wall. Its function is as follows. Aerial growth, conidiation, and dispersal of filamentous fungi in the environment rely upon a capability of their secreting small amphipathic proteins called hydrophobins (HPBs) with low sequence identity. Class I can self-assemble into an outermost layer of rodlet bundles on aerial cell surfaces, conferring cellular hydrophobicity that supports fungal growth, development and dispersal; whereas Class II form highly ordered films at water-air interfaces through intermolecular interactions but contribute nothing to the rodlet structure. In P.expansum, hydrophobins contribute to germination, tolerance to cold stress and mycotoxins patulin and citrinin production. This chain is Class I hydrophobin E, found in Penicillium expansum (Blue mold rot fungus).